We begin with the raw amino-acid sequence, 355 residues long: Elongation factor Ts (355 aa).

Residues 82–85 (TDFV) are involved in Mg(2+) ion dislocation from EF-Tu.

Belongs to the EF-Ts family.

It localises to the cytoplasm. Functionally, associates with the EF-Tu.GDP complex and induces the exchange of GDP to GTP. It remains bound to the aminoacyl-tRNA.EF-Tu.GTP complex up to the GTP hydrolysis stage on the ribosome. The sequence is that of Elongation factor Ts from Wolinella succinogenes (strain ATCC 29543 / DSM 1740 / CCUG 13145 / JCM 31913 / LMG 7466 / NCTC 11488 / FDC 602W) (Vibrio succinogenes).